An 87-amino-acid polypeptide reads, in one-letter code: Small ribosomal subunit protein uS17 (87 aa).

The protein belongs to the universal ribosomal protein uS17 family. Part of the 30S ribosomal subunit.

One of the primary rRNA binding proteins, it binds specifically to the 5'-end of 16S ribosomal RNA. The chain is Small ribosomal subunit protein uS17 from Bacillus subtilis (strain 168).